A 201-amino-acid polypeptide reads, in one-letter code: MAIILPELPYAYDALEPYIDAETMHLHHDKHHQTYVNNANAALEKHPEIGEDLEALLADVESIPADIRQALINNGGGHLNHALFWELMTPEKTAPSAELAAAIDATFGSFEEFQAAFTAAATTRFGSGWAWLVVNKEGKLEVTSTANQDTPISEGKKPILGLDVWEHAYYVKYRNVRPDYIKAFFSVINWNKVDELYAAAK.

Histidine 27, histidine 81, aspartate 163, and histidine 167 together coordinate Mn(2+).

The protein belongs to the iron/manganese superoxide dismutase family. In terms of assembly, homodimer. The cofactor is Mn(2+).

It carries out the reaction 2 superoxide + 2 H(+) = H2O2 + O2. Its function is as follows. Destroys superoxide anion radicals which are normally produced within the cells and which are toxic to biological systems. May play a critical role against oxidative stress, affecting both the survival and the virulence of S.pneumoniae. This chain is Superoxide dismutase [Mn] (sodA), found in Streptococcus pneumoniae serotype 4 (strain ATCC BAA-334 / TIGR4).